Reading from the N-terminus, the 312-residue chain is Putative mitochondrial transporter UCP3 (312 aa).

At 1 to 10 the chain is on the mitochondrial intermembrane side; that stretch reads MVGLKPSDVP. Residues 11–32 traverse the membrane as a helical segment; the sequence is PTMAVKFLGAGTAACFADLVTF. 3 Solcar repeats span residues 11–105, 114–206, and 215–300; these read PTMA…VKQV, SSLT…LKEK, and DNFP…LKRA. Residues 33–76 lie on the Mitochondrial matrix side of the membrane; that stretch reads PLDTAKVRLQIQGENQAVQTARLVQYRGVLGTILTMVRTEGPCS. Residues 77-99 form a helical membrane-spanning segment; it reads PYNGLVAGLQRQMSFASIRIGLY. Over 100–119 the chain is Mitochondrial intermembrane; that stretch reads DSVKQVYTPKGADNSSLTTR. The helical transmembrane segment at 120–136 threads the bilayer; sequence ILAGCTTGAMAVTCAQP. Residues 137–183 lie on the Mitochondrial matrix side of the membrane; that stretch reads TDVVKVRFQASIHLGPSRSDRKYSGTMDAYRTIAREEGVRGLWKGTL. Residues 184–200 form a helical membrane-spanning segment; that stretch reads PNIMRNAIVNCAEVVTY. The Mitochondrial intermembrane portion of the chain corresponds to 201-217; it reads DILKEKLLDYHLLTDNF. Residues 218-237 form a helical membrane-spanning segment; it reads PCHFVSAFGAGFCATVVASP. The Mitochondrial matrix portion of the chain corresponds to 238–271; sequence VDVVKTRYMNSPPGQYFSPLDCMIKMVAQEGPTA. Residues 272–294 traverse the membrane as a helical segment; it reads FYKGFTPSFLRLGSWNVVMFVTY. Residues 279 to 301 are purine nucleotide binding; sequence SFLRLGSWNVVMFVTYEQLKRAL. Over 295-312 the chain is Mitochondrial intermembrane; that stretch reads EQLKRALMKVQMLRESPF.

Belongs to the mitochondrial carrier (TC 2.A.29) family. As to quaternary structure, interacts with HAX1; the interaction is direct and calcium-dependent. Only in skeletal muscle and heart. Also expressed in white and brown adipose tissues. Is more expressed in glycolytic than in oxidative skeletal muscles.

Its subcellular location is the mitochondrion inner membrane. The proton transporter activity is activated by fatty acids (in vitro). The proton transporter activity is inhibited by ATP and ADP (in vitro). The effect of Ubiquinone/coenzyme Q10 on the proton transporter activity in reconstituted membranes is unclear (in vitro). Functionally, putative transmembrane transporter that plays a role in mitochondrial metabolism via an as yet unclear mechanism. Originally, this mitochondrial protein was thought to act as a proton transmembrane transporter from the mitochondrial intermembrane space into the matrix, causing proton leaks through the inner mitochondrial membrane, thereby uncoupling mitochondrial membrane potential generation from ATP synthesis. However, this function is controversial and uncoupling may not be the function, or at least not the main function, but rather a consequence of more conventional metabolite transporter activity. The sequence is that of Putative mitochondrial transporter UCP3 from Homo sapiens (Human).